The chain runs to 417 residues: S-adenosylmethionine synthase (417 aa).

ATP is bound at residue H16. D18 is a Mg(2+) binding site. Position 44 (E44) interacts with K(+). L-methionine is bound by residues E57 and Q100. Residues 100 to 110 (QSPDIAQGVTS) are flexible loop. Residues 175 to 177 (DGK), 251 to 252 (KF), D260, 266 to 267 (RK), A283, and K287 contribute to the ATP site. Residue D260 coordinates L-methionine. Residue K291 coordinates L-methionine.

This sequence belongs to the AdoMet synthase family. As to quaternary structure, homotetramer; dimer of dimers. The cofactor is Mg(2+). It depends on K(+) as a cofactor.

The protein resides in the cytoplasm. The enzyme catalyses L-methionine + ATP + H2O = S-adenosyl-L-methionine + phosphate + diphosphate. It functions in the pathway amino-acid biosynthesis; S-adenosyl-L-methionine biosynthesis; S-adenosyl-L-methionine from L-methionine: step 1/1. Functionally, catalyzes the formation of S-adenosylmethionine (AdoMet) from methionine and ATP. The overall synthetic reaction is composed of two sequential steps, AdoMet formation and the subsequent tripolyphosphate hydrolysis which occurs prior to release of AdoMet from the enzyme. This chain is S-adenosylmethionine synthase, found in Picosynechococcus sp. (strain ATCC 27264 / PCC 7002 / PR-6) (Agmenellum quadruplicatum).